The chain runs to 293 residues: Protease HtpX (293 aa).

A run of 2 helical transmembrane segments spans residues 4-24 (IALFLITNLAVMLVFGLVLSL) and 34-54 (GLMIMAGLFGFGGAFVSLLMS). His139 serves as a coordination point for Zn(2+). The active site involves Glu140. His143 serves as a coordination point for Zn(2+). The next 2 helical transmembrane spans lie at 158–178 (IVNTFVIFVSRLIAQVVSGFL) and 193–213 (LVYFAVATVLELVFGILASII). Residue Glu222 participates in Zn(2+) binding.

It belongs to the peptidase M48B family. The cofactor is Zn(2+).

Its subcellular location is the cell inner membrane. The sequence is that of Protease HtpX from Pectobacterium carotovorum subsp. carotovorum (strain PC1).